The chain runs to 334 residues: Phosphate acyltransferase (334 aa).

Belongs to the PlsX family. As to quaternary structure, homodimer. Probably interacts with PlsY.

It is found in the cytoplasm. The catalysed reaction is a fatty acyl-[ACP] + phosphate = an acyl phosphate + holo-[ACP]. It participates in lipid metabolism; phospholipid metabolism. Functionally, catalyzes the reversible formation of acyl-phosphate (acyl-PO(4)) from acyl-[acyl-carrier-protein] (acyl-ACP). This enzyme utilizes acyl-ACP as fatty acyl donor, but not acyl-CoA. The polypeptide is Phosphate acyltransferase (Caldicellulosiruptor bescii (strain ATCC BAA-1888 / DSM 6725 / KCTC 15123 / Z-1320) (Anaerocellum thermophilum)).